We begin with the raw amino-acid sequence, 424 residues long: Serine hydroxymethyltransferase 2 (424 aa).

Residues leucine 125 and 129 to 131 (GHL) contribute to the (6S)-5,6,7,8-tetrahydrofolate site. Lysine 234 is subject to N6-(pyridoxal phosphate)lysine. Glutamate 250 is a binding site for (6S)-5,6,7,8-tetrahydrofolate.

This sequence belongs to the SHMT family. Homodimer. It depends on pyridoxal 5'-phosphate as a cofactor.

It is found in the cytoplasm. It carries out the reaction (6R)-5,10-methylene-5,6,7,8-tetrahydrofolate + glycine + H2O = (6S)-5,6,7,8-tetrahydrofolate + L-serine. The protein operates within one-carbon metabolism; tetrahydrofolate interconversion. Its pathway is amino-acid biosynthesis; glycine biosynthesis; glycine from L-serine: step 1/1. Functionally, catalyzes the reversible interconversion of serine and glycine with tetrahydrofolate (THF) serving as the one-carbon carrier. This reaction serves as the major source of one-carbon groups required for the biosynthesis of purines, thymidylate, methionine, and other important biomolecules. Also exhibits THF-independent aldolase activity toward beta-hydroxyamino acids, producing glycine and aldehydes, via a retro-aldol mechanism. This is Serine hydroxymethyltransferase 2 from Burkholderia mallei (strain ATCC 23344).